A 243-amino-acid polypeptide reads, in one-letter code: Ubiquinone/menaquinone biosynthesis C-methyltransferase UbiE (243 aa).

S-adenosyl-L-methionine is bound by residues Thr69, Asp90, and 116–117 (DA).

It belongs to the class I-like SAM-binding methyltransferase superfamily. MenG/UbiE family.

It catalyses the reaction a 2-demethylmenaquinol + S-adenosyl-L-methionine = a menaquinol + S-adenosyl-L-homocysteine + H(+). The catalysed reaction is a 2-methoxy-6-(all-trans-polyprenyl)benzene-1,4-diol + S-adenosyl-L-methionine = a 5-methoxy-2-methyl-3-(all-trans-polyprenyl)benzene-1,4-diol + S-adenosyl-L-homocysteine + H(+). The protein operates within quinol/quinone metabolism; menaquinone biosynthesis; menaquinol from 1,4-dihydroxy-2-naphthoate: step 2/2. It functions in the pathway cofactor biosynthesis; ubiquinone biosynthesis. Its function is as follows. Methyltransferase required for the conversion of demethylmenaquinol (DMKH2) to menaquinol (MKH2) and the conversion of 2-polyprenyl-6-methoxy-1,4-benzoquinol (DDMQH2) to 2-polyprenyl-3-methyl-6-methoxy-1,4-benzoquinol (DMQH2). In Cupriavidus taiwanensis (strain DSM 17343 / BCRC 17206 / CCUG 44338 / CIP 107171 / LMG 19424 / R1) (Ralstonia taiwanensis (strain LMG 19424)), this protein is Ubiquinone/menaquinone biosynthesis C-methyltransferase UbiE.